The chain runs to 571 residues: DExH-box ATP-dependent RNA helicase DExH16, mitochondrial (571 aa).

The N-terminal 56 residues, 1-56 (MAYSVVRLRKVSALGISRVLQADKGSLWRFHFEPEFGDLLRLGVLTRNYRKNSGSP), are a transit peptide targeting the mitochondrion. The region spanning 83–212 (IARKKKRKVI…HLCGDPAVVP (130 aa)) is the Helicase ATP-binding domain. 96 to 103 (GPTNSGKT) serves as a coordination point for ATP. A DEIH box; degenerate motif is present at residues 176–179 (DEIQ). Positions 213–399 (LVEDILKVTG…GLFPTFDLLS (187 aa)) constitute a Helicase C-terminal domain.

Belongs to the DExH box helicase family. In terms of assembly, homodimer; in free form. Component of the mitochondrial degradosome (mtEXO) complex which is a heteropentamer containing 2 copies of SUPV3L1 and 3 copies of PNPT1. It depends on Mg(2+) as a cofactor. Mn(2+) is required as a cofactor. As to expression, weakly expressed.

Its subcellular location is the nucleus. It is found in the mitochondrion matrix. The protein localises to the mitochondrion nucleoid. The enzyme catalyses ATP + H2O = ADP + phosphate + H(+). Activated by the presence of mitochondrial RNA. Its function is as follows. Major helicase player in mitochondrial RNA metabolism. Component of the mitochondrial degradosome (mtEXO) complex, that degrades 3' overhang double-stranded RNA with a 3'-to-5' directionality in an ATP-dependent manner. ATPase and ATP-dependent multisubstrate helicase, able to unwind double-stranded (ds) DNA and RNA, and RNA/DNA heteroduplexes in the 5'-to-3' direction. Plays a role in the RNA surveillance system in mitochondria; regulates the stability of mature mRNAs, the removal of aberrantly formed mRNAs and the rapid degradation of non coding processing intermediates. Required during pollen development. This chain is DExH-box ATP-dependent RNA helicase DExH16, mitochondrial, found in Arabidopsis thaliana (Mouse-ear cress).